The sequence spans 404 residues: Latent membrane protein 1 (404 aa).

The Cytoplasmic portion of the chain corresponds to 1–23; that stretch reads MERDLESAPPSAPRPPLGPPLSS. The helical transmembrane segment at 24–44 threads the bilayer; that stretch reads SIGLALLLLLLALLFWLYIVM. Residues 45 to 51 are Extracellular-facing; that stretch reads SDWTGGA. The helical transmembrane segment at 52–72 threads the bilayer; sequence LLVLYSFALMLIIIILIIFIF. Topologically, residues 73–75 are cytoplasmic; the sequence is RRD. Residues 76 to 96 traverse the membrane as a helical segment; the sequence is LLCPLGGLGLLLLMITLLLIA. The Extracellular segment spans residues 97–106; that stretch reads LWNLHGQALY. A helical membrane pass occupies residues 107–127; the sequence is LGIVLFIFGCLLVFGIWIYFL. Over 128–139 the chain is Cytoplasmic; that stretch reads EILWRLGATLWQ. A helical transmembrane segment spans residues 140–160; that stretch reads LLAFILAFFLAIILLIIALYL. Residues 161 to 163 are Extracellular-facing; that stretch reads QQN. Residues 164–184 traverse the membrane as a helical segment; the sequence is WWTLLVDLLWLLLFMAILIWM. The Cytoplasmic segment spans residues 185-404; that stretch reads YYHGPRHTDE…HGPVQLSYYD (220 aa). The tract at residues 194–232 is CTAR1; it reads EHHHDDSLPHPQQATDDSSHESDSNSNEGRHHLLVSGAG. Positions 194 to 404 are disordered; the sequence is EHHHDDSLPH…HGPVQLSYYD (211 aa). An Interaction with host TRAF proteins motif is present at residues 204 to 208; sequence PQQAT. Residues 210-224 are compositionally biased toward basic and acidic residues; the sequence is DSSHESDSNSNEGRH. Low complexity-rich tracts occupy residues 251 to 322 and 375 to 384; these read NGPQ…PQDP and PHLPTLLLGT. Positions 370–404 are CTAR2; it reads GGGGDPHLPTLLLGTSGSGGDDDDPHGPVQLSYYD.

This sequence belongs to the herpesviridae LMP-1 family. As to quaternary structure, interacts (via PXQXT motif) with host tumor necrosis factor receptor-associated factor (TRAF) proteins TRAF1, TRAF2, TRAF3 and TRAF5. Interacts with human protein ZMYND11; leading to negatively regulate NF-kappa-B activation. Interacts with host UBE2I; this interaction induces the sumoylation of various cellular proteins. Interacts with host IRF7. Interacts with host TYK2. Post-translationally, ubiquitinated on the N-terminus.

The protein localises to the host cell membrane. Its function is as follows. Acts as a CD40 functional homolog to prevent apoptosis of infected B-lymphocytes and drive their proliferation. Functions as a constitutively active tumor necrosis factor receptor that induces the activation of several signaling pathways, including those of the NF-kappa-B family. LMP1 signaling leads to up-regulation of antiapoptotic proteins and provide growth signals in latently infected cells. Interacts with host UBE2I and subsequently affects the sumoylation state of several cellular proteins. For example, induces the sumoylation of host IRF7 thereby limiting its transcriptional activity and modulating the activation of innate immune responses. Also inhibits host IFN-alpha-stimulated STAT2 nuclear translocation and interferon-stimulated response element transcriptional activity by interacting with and inhibiting host TYK2. Induces SUMO expression during viral latency thereby dysregulating the host sumoylation processes. The sequence is that of Latent membrane protein 1 (LMP1) from Homo sapiens (Human).